Consider the following 462-residue polypeptide: uncharacterized protein (462 aa).

The TRAM domain occupies 12–70 (MLKKNDIIQVAISDLSHEGAGVAKHDGFVFFVDNALPEEVIDMRVLKVNKNSGFGKVEA). S-adenosyl-L-methionine is bound by residues glutamine 294, tyrosine 323, glutamate 344, and aspartate 392. The active-site Nucleophile is cysteine 419.

This sequence belongs to the class I-like SAM-binding methyltransferase superfamily. RNA M5U methyltransferase family.

This is an uncharacterized protein from Streptococcus pyogenes serotype M3 (strain ATCC BAA-595 / MGAS315).